The chain runs to 416 residues: Exodeoxyribonuclease 7 large subunit (416 aa).

The protein belongs to the XseA family. In terms of assembly, heterooligomer composed of large and small subunits.

It localises to the cytoplasm. It carries out the reaction Exonucleolytic cleavage in either 5'- to 3'- or 3'- to 5'-direction to yield nucleoside 5'-phosphates.. Functionally, bidirectionally degrades single-stranded DNA into large acid-insoluble oligonucleotides, which are then degraded further into small acid-soluble oligonucleotides. The sequence is that of Exodeoxyribonuclease 7 large subunit from Acidothermus cellulolyticus (strain ATCC 43068 / DSM 8971 / 11B).